Here is a 199-residue protein sequence, read N- to C-terminus: Small ribosomal subunit protein eS1 (199 aa).

The protein belongs to the eukaryotic ribosomal protein eS1 family.

This chain is Small ribosomal subunit protein eS1, found in Pyrococcus abyssi (strain GE5 / Orsay).